The following is a 93-amino-acid chain: Protein Tat (93 aa).

An interaction with human CREBBP region spans residues 1–24; the sequence is MEPVDPELEPWNHPGSQPKTACNN. The tract at residues 1–48 is transactivation; it reads MEPVDPELEPWNHPGSQPKTACNNCHCKVCCYHCVYCFTKKGLGISYG. Cys-22, Cys-25, and Cys-27 together coordinate Zn(2+). Residues 22-37 are cysteine-rich; sequence CNNCHCKVCCYHCVYC. Position 28 is an N6-acetyllysine; by host PCAF (Lys-28). Cys-30, His-33, Cys-34, and Cys-37 together coordinate Zn(2+). The core stretch occupies residues 38-48; the sequence is FTKKGLGISYG. Residues 48-58 show a composition bias toward basic residues; sequence GRKKRSQRRRT. Residues 48-93 are disordered; that stretch reads GRKKRSQRRRTPQSNKSHQDPLPKQPLSQRLGDQTGQKEQKKTLES. A Nuclear localization signal, RNA-binding (TAR), and protein transduction motif is present at residues 49–57; it reads RKKRSQRRR. The interval 49 to 86 is interaction with the host capping enzyme RNGTT; it reads RKKRSQRRRTPQSNKSHQDPLPKQPLSQRLGDQTGQKE. 2 positions are modified to N6-acetyllysine; by host EP300 and GCN5L2: Lys-50 and Lys-51. Arg-52 carries the asymmetric dimethylarginine; by host PRMT6 modification. A Glycyl lysine isopeptide (Lys-Gly) (interchain with G-Cter in ubiquitin) cross-link involves residue Lys-71. Residues 73-82 show a composition bias toward polar residues; sequence PLSQRLGDQT. A compositionally biased stretch (basic and acidic residues) spans 83-93; the sequence is GQKEQKKTLES.

The protein belongs to the lentiviruses Tat family. Interacts with host CCNT1. Associates with the P-TEFb complex composed at least of Tat, P-TEFb (CDK9 and CCNT1), TAR RNA, RNA Pol II. Recruits the HATs CREBBP, TAF1/TFIID, EP300, PCAF and GCN5L2. Interacts with host KAT5/Tip60; this interaction targets the latter to degradation. Interacts with the host deacetylase SIRT1. Interacts with host capping enzyme RNGTT; this interaction stimulates RNGTT. Binds to host KDR, and to the host integrins ITGAV/ITGB3 and ITGA5/ITGB1. Interacts with host KPNB1/importin beta-1 without previous binding to KPNA1/importin alpha-1. Interacts with EIF2AK2. Interacts with host nucleosome assembly protein NAP1L1; this interaction may be required for the transport of Tat within the nucleus, since the two proteins interact at the nuclear rim. Interacts with host C1QBP/SF2P32; this interaction involves lysine-acetylated Tat. Interacts with the host chemokine receptors CCR2, CCR3 and CXCR4. Interacts with host DPP4/CD26; this interaction may trigger an anti-proliferative effect. Interacts with host LDLR. Interacts with the host extracellular matrix metalloproteinase MMP1. Interacts with host PRMT6; this interaction mediates Tat's methylation. Interacts with, and is ubiquitinated by MDM2/Hdm2. Interacts with host PSMC3 and HTATIP2. Interacts with STAB1; this interaction may overcome SATB1-mediated repression of IL2 and IL2RA (interleukin) in T cells by binding to the same domain than HDAC1. Interacts (when acetylated) with human CDK13, thereby increasing HIV-1 mRNA splicing and promoting the production of the doubly spliced HIV-1 protein Nef. Interacts with host TBP; this interaction modulates the activity of transcriptional pre-initiation complex. Interacts with host RELA. In terms of processing, asymmetrical arginine methylation by host PRMT6 seems to diminish the transactivation capacity of Tat and affects the interaction with host CCNT1. Post-translationally, acetylation by EP300, CREBBP, GCN5L2/GCN5 and PCAF regulates the transactivation activity of Tat. EP300-mediated acetylation of Lys-50 promotes dissociation of Tat from the TAR RNA through the competitive binding to PCAF's bromodomain. In addition, the non-acetylated Tat's N-terminus can also interact with PCAF. PCAF-mediated acetylation of Lys-28 enhances Tat's binding to CCNT1. Lys-50 is deacetylated by SIRT1. Polyubiquitination by host MDM2 does not target Tat to degradation, but activates its transactivation function and fosters interaction with CCNT1 and TAR RNA. In terms of processing, phosphorylated by EIF2AK2 on serine and threonine residues adjacent to the basic region important for TAR RNA binding and function. Phosphorylation of Tat by EIF2AK2 is dependent on the prior activation of EIF2AK2 by dsRNA.

The protein resides in the host nucleus. The protein localises to the host nucleolus. It localises to the host cytoplasm. Its subcellular location is the secreted. Functionally, transcriptional activator that increases RNA Pol II processivity, thereby increasing the level of full-length viral transcripts. Recognizes a hairpin structure at the 5'-LTR of the nascent viral mRNAs referred to as the transactivation responsive RNA element (TAR) and recruits the cyclin T1-CDK9 complex (P-TEFb complex) that will in turn hyperphosphorylate the RNA polymerase II to allow efficient elongation. The CDK9 component of P-TEFb and other Tat-activated kinases hyperphosphorylate the C-terminus of RNA Pol II that becomes stabilized and much more processive. Other factors such as HTATSF1/Tat-SF1, SUPT5H/SPT5, and HTATIP2 are also important for Tat's function. Besides its effect on RNA Pol II processivity, Tat induces chromatin remodeling of proviral genes by recruiting the histone acetyltransferases (HATs) CREBBP, EP300 and PCAF to the chromatin. This also contributes to the increase in proviral transcription rate, especially when the provirus integrates in transcriptionally silent region of the host genome. To ensure maximal activation of the LTR, Tat mediates nuclear translocation of NF-kappa-B by interacting with host RELA. Through its interaction with host TBP, Tat may also modulate transcription initiation. Tat can reactivate a latently infected cell by penetrating in it and transactivating its LTR promoter. In the cytoplasm, Tat is thought to act as a translational activator of HIV-1 mRNAs. Extracellular circulating Tat can be endocytosed by surrounding uninfected cells via the binding to several surface receptors such as CD26, CXCR4, heparan sulfate proteoglycans (HSPG) or LDLR. Neurons are rarely infected, but they internalize Tat via their LDLR. Through its interaction with nuclear HATs, Tat is potentially able to control the acetylation-dependent cellular gene expression. Modulates the expression of many cellular genes involved in cell survival, proliferation or in coding for cytokines or cytokine receptors. Tat plays a role in T-cell and neurons apoptosis. Tat induced neurotoxicity and apoptosis probably contribute to neuroAIDS. Circulating Tat also acts as a chemokine-like and/or growth factor-like molecule that binds to specific receptors on the surface of the cells, affecting many cellular pathways. In the vascular system, Tat binds to ITGAV/ITGB3 and ITGA5/ITGB1 integrins dimers at the surface of endothelial cells and competes with bFGF for heparin-binding sites, leading to an excess of soluble bFGF. The chain is Protein Tat from Pan troglodytes (Chimpanzee).